A 415-amino-acid chain; its full sequence is MNEVLAKGKKAKEIARELVLKSTEQKNEALSAIADQLILETAYILEENKKDIEEGKAKGFSDSLLDRLMLNEQRIVDMTEGIKQLIELRDPVGECVSAWERPNGLSIQEMRVPLGVVGMIYEARPNVTVDAATICLKTGNAVILRGSSSAIHSNKAIVAVIHRALKQTSLPQESVQLIEDTTRDSAKQLFTMNDYLDVLIPRGGKQLIDTVVREASVPVLETGAGNCHVFIDETADKQMAFDIIINAKTQRPSVCNAIETIVLHEKWAEQYGSELFSSLKKRGVELRGDQKALAMDSSIVLASEEDWGTEFLSLTLAVKLVSSIEEAIHHINTYGSMHSEAIISENEENVSKFFVSVDAAALYHNASTRFTDGSEFGFGAEIGISTQKLHVRGPMGLPALTSTKYVIRGNGQIRK.

The protein belongs to the gamma-glutamyl phosphate reductase family.

Its subcellular location is the cytoplasm. It catalyses the reaction L-glutamate 5-semialdehyde + phosphate + NADP(+) = L-glutamyl 5-phosphate + NADPH + H(+). The protein operates within amino-acid biosynthesis; L-proline biosynthesis; L-glutamate 5-semialdehyde from L-glutamate: step 2/2. Its function is as follows. Catalyzes the NADPH-dependent reduction of L-glutamate 5-phosphate into L-glutamate 5-semialdehyde and phosphate. The product spontaneously undergoes cyclization to form 1-pyrroline-5-carboxylate. The sequence is that of Gamma-glutamyl phosphate reductase from Bacillus thuringiensis subsp. konkukian (strain 97-27).